Here is a 255-residue protein sequence, read N- to C-terminus: uncharacterized protein (255 aa).

A J domain is found at 4 to 72 (DPYSVLGVEK…KRRKHYDKTG (69 aa)). Basic residues-rich tracts occupy residues 167 to 178 (FAPNEKKRKRRA) and 243 to 255 (TKPK…RSKE). Disordered stretches follow at residues 167–215 (FAPN…EEAL) and 230–255 (LISN…RSKE).

The protein belongs to the DnaJ family.

The protein localises to the nucleus. Its subcellular location is the nucleolus. This is an uncharacterized protein from Schizosaccharomyces pombe (strain 972 / ATCC 24843) (Fission yeast).